A 302-amino-acid chain; its full sequence is Probable protein S-acyltransferase 13 (302 aa).

The next 2 helical transmembrane spans lie at 17–37 and 56–76; these read SIMI…VVVV and VLAF…SVVV. Positions 116-166 constitute a DHHC domain; that stretch reads RYCRKCNQYKPPRSHHCSVCGRCILKMDHHCVWVVNCVGANNYKSFLLFLF. The active-site S-palmitoyl cysteine intermediate is C146. 2 consecutive transmembrane segments (helical) span residues 166-186 and 204-224; these read FYTF…FLVF and SFVA…FLIM.

The protein belongs to the DHHC palmitoyltransferase family.

The protein localises to the cell membrane. Its subcellular location is the cytoplasmic vesicle membrane. The catalysed reaction is L-cysteinyl-[protein] + hexadecanoyl-CoA = S-hexadecanoyl-L-cysteinyl-[protein] + CoA. Functionally, palmitoyl acyltransferase. This chain is Probable protein S-acyltransferase 13 (PAT13), found in Arabidopsis thaliana (Mouse-ear cress).